The chain runs to 302 residues: tRNA pseudouridine synthase B (302 aa).

D40 serves as the catalytic Nucleophile.

The protein belongs to the pseudouridine synthase TruB family. Type 1 subfamily.

The catalysed reaction is uridine(55) in tRNA = pseudouridine(55) in tRNA. In terms of biological role, responsible for synthesis of pseudouridine from uracil-55 in the psi GC loop of transfer RNAs. The sequence is that of tRNA pseudouridine synthase B from Shouchella clausii (strain KSM-K16) (Alkalihalobacillus clausii).